The chain runs to 167 residues: Crossover junction endodeoxyribonuclease RuvC (167 aa).

Active-site residues include Asp8, Glu68, and Asp140. Asp8, Glu68, and Asp140 together coordinate Mg(2+).

The protein belongs to the RuvC family. In terms of assembly, homodimer which binds Holliday junction (HJ) DNA. The HJ becomes 2-fold symmetrical on binding to RuvC with unstacked arms; it has a different conformation from HJ DNA in complex with RuvA. In the full resolvosome a probable DNA-RuvA(4)-RuvB(12)-RuvC(2) complex forms which resolves the HJ. Mg(2+) serves as cofactor.

The protein resides in the cytoplasm. The catalysed reaction is Endonucleolytic cleavage at a junction such as a reciprocal single-stranded crossover between two homologous DNA duplexes (Holliday junction).. In terms of biological role, the RuvA-RuvB-RuvC complex processes Holliday junction (HJ) DNA during genetic recombination and DNA repair. Endonuclease that resolves HJ intermediates. Cleaves cruciform DNA by making single-stranded nicks across the HJ at symmetrical positions within the homologous arms, yielding a 5'-phosphate and a 3'-hydroxyl group; requires a central core of homology in the junction. The consensus cleavage sequence is 5'-(A/T)TT(C/G)-3'. Cleavage occurs on the 3'-side of the TT dinucleotide at the point of strand exchange. HJ branch migration catalyzed by RuvA-RuvB allows RuvC to scan DNA until it finds its consensus sequence, where it cleaves and resolves the cruciform DNA. This chain is Crossover junction endodeoxyribonuclease RuvC, found in Sinorhizobium medicae (strain WSM419) (Ensifer medicae).